We begin with the raw amino-acid sequence, 629 residues long: tRNA uridine 5-carboxymethylaminomethyl modification enzyme MnmG (629 aa).

FAD-binding positions include 13-18, Val125, and Ser180; that span reads GGGHAG. Residue 273–287 participates in NAD(+) binding; sequence GPRYCPSIEDKVMRF. Gln370 serves as a coordination point for FAD.

This sequence belongs to the MnmG family. In terms of assembly, homodimer. Heterotetramer of two MnmE and two MnmG subunits. It depends on FAD as a cofactor.

It localises to the cytoplasm. Its function is as follows. NAD-binding protein involved in the addition of a carboxymethylaminomethyl (cmnm) group at the wobble position (U34) of certain tRNAs, forming tRNA-cmnm(5)s(2)U34. The sequence is that of tRNA uridine 5-carboxymethylaminomethyl modification enzyme MnmG from Salmonella dublin (strain CT_02021853).